The sequence spans 430 residues: Isochorismate synthase MenF (430 aa).

K187 (proton acceptor) is an active-site residue. E237 serves as the catalytic Proton donor. The Mg(2+) site is built by E281 and E414.

Belongs to the isochorismate synthase family. The cofactor is Mg(2+).

It carries out the reaction chorismate = isochorismate. Its pathway is quinol/quinone metabolism; 1,4-dihydroxy-2-naphthoate biosynthesis; 1,4-dihydroxy-2-naphthoate from chorismate: step 1/7. It participates in quinol/quinone metabolism; menaquinone biosynthesis. Its function is as follows. Catalyzes the conversion of chorismate to isochorismate. The protein is Isochorismate synthase MenF of Haemophilus influenzae (strain ATCC 51907 / DSM 11121 / KW20 / Rd).